A 444-amino-acid chain; its full sequence is Zinc finger protein ZIC 1 (444 aa).

The C2H2-type 1 zinc finger occupies leucine 222 to histidine 257. The C2H2-type 2; degenerate zinc finger occupies glutamate 271–histidine 293. 3 consecutive C2H2-type zinc fingers follow at residues phenylalanine 299 to histidine 323, phenylalanine 329 to histidine 353, and tyrosine 359 to histidine 381. Residues serine 372–histidine 432 are disordered. The segment covering serine 383–histidine 432 has biased composition (low complexity).

The protein belongs to the GLI C2H2-type zinc-finger protein family.

The protein localises to the nucleus. It localises to the cytoplasm. Acts as a transcriptional activator. Involved in neurogenesis. Plays important roles in the early stage of organogenesis of the CNS, as well as during dorsal spinal cord development and maturation of the cerebellum. Binds to the minimal GLI-consensus sequence 5'-TGGGTGGTC-3'. This chain is Zinc finger protein ZIC 1 (ZIC1), found in Gallus gallus (Chicken).